A 284-amino-acid chain; its full sequence is D-tagatose-1,6-bisphosphate aldolase subunit GatY (284 aa).

The Proton donor role is filled by Asp-82. Residues His-83 and His-180 each coordinate Zn(2+). Gly-181 is a dihydroxyacetone phosphate binding site. Residue His-208 coordinates Zn(2+). Dihydroxyacetone phosphate-binding positions include Gly-209 to Ser-211 and Asn-230 to Thr-233.

It belongs to the class II fructose-bisphosphate aldolase family. TagBP aldolase GatY subfamily. As to quaternary structure, forms a complex with GatZ. Zn(2+) is required as a cofactor.

The catalysed reaction is D-tagatofuranose 1,6-bisphosphate = D-glyceraldehyde 3-phosphate + dihydroxyacetone phosphate. Its pathway is carbohydrate metabolism; D-tagatose 6-phosphate degradation; D-glyceraldehyde 3-phosphate and glycerone phosphate from D-tagatose 6-phosphate: step 2/2. In terms of biological role, catalytic subunit of the tagatose-1,6-bisphosphate aldolase GatYZ, which catalyzes the reversible aldol condensation of dihydroxyacetone phosphate (DHAP or glycerone-phosphate) with glyceraldehyde 3-phosphate (G3P) to produce tagatose 1,6-bisphosphate (TBP). Requires GatZ subunit for full activity and stability. Is involved in the catabolism of galactitol. This Salmonella choleraesuis (strain SC-B67) protein is D-tagatose-1,6-bisphosphate aldolase subunit GatY.